We begin with the raw amino-acid sequence, 218 residues long: MNDDSETPGAEAWMALPLFNRKASPDHEQNVLTWFECWRPPEDDVSDFKSLEDYEDSPTHSIGSSGLHSGSLDSDYHYYTASDLVFSDDGGVGRNADLLSEISDDHIPQLSFSTPSTCPFPGCKSTALFTTGRDFRRHYRQHFKRFFCRYEECSQSTNDPGDAGKKGFATRKDRARHEAKHNPAIRCQWRDNNGDQCTRTFSRMDNMRDHFRRIHGKE.

Residues 154-181 are disordered; the sequence is SQSTNDPGDAGKKGFATRKDRARHEAKH. The span at 162 to 176 shows a compositional bias: basic and acidic residues; it reads DAGKKGFATRKDRAR. The C2H2-type zinc finger occupies 185–215; the sequence is IRCQWRDNNGDQCTRTFSRMDNMRDHFRRIH.

Its subcellular location is the nucleus. Transcriptional activator of part of the trichothecene biosynthesis cluster that mediates the production of the antimicrobial trichothecene harzianum A (HA) that plays a role in Botrytis cinerea antagonistic activity and plant defense priming. Regulates expression of both trichothecene and mevalonate pathway genes. This is Trichothecene biosynthesis transcription regulator TRI6 from Trichoderma arundinaceum.